The following is a 2068-amino-acid chain: MDFFIIIFILLLSFFFFDYNFCSRGLVFYIGNKSLKLLKKCNNLEKVYRSTIYLIFPFLQHIFVHIFYYYIEKKKEYLNNLIFEQSKEHYDIKGQKEFEACNFKKEDIFNYIIETSIKIKNYVYNKALHIFFFIVEYTNIYENINLNCHINTREVLNNNNFGVVIIDYYLPNTSIKKKKKKKKKDQTYNYINDSEKIDLYDLVNIKQEKKIKFVLIDNKWKHILGLGKIEDPNVQHLYLQDTVLIQYLQFSWIFKNHFFKKLYNDRDVSTHNYYEIKKNSMQQNDRDGVKEQYKKTCLGEEELIVDGNTCNNNHLNDHVNIKDEEYFNNKNYMNDQEEIIIRSLKKWNINKENVCSNKEENFNLITNNDKLMENTIYKNDNKDLYIETQKMKEDHVYNNSINLKKTKINEIEQNNLNTQNNNCYSNKEKYYINQEKKKQQLKYIKNENMIRDKLKMQLNRWKYKNIKGIIVILPEIFYNYINMNEMENKIPIYYFLKKDIKIDTFTVIAKLLGYICIHIHININFGFSIPFIFKSKTTNILNISNNFNLHMNKNLFNIYNENGTSNIKGTHTNISSDDKKLKCSKHISKQDIKNNINLCHKSVSNLNDHEKENKNKQDKMNIYSYINDHINIYNNDNNDNNSIHNNLYNKQNDNIKDTINYMDQNDKNNCHDMFLNNNYNEQSNEYHNHQQCVNNINDENRYQNYAHNNNNNNYNYIHTDYTNSKLNSIVENKFNMDDNYTFLFSTPFSFFSDNYNDLNIAMNHFKAIFKNYNFVFLCFNDGTNIMLNYFLEKIYKKKKNKTPGGMTTLISTAGVAENIKNTFNLYNTNAYKCHINNYKKKHVHDTKGDTYDNEKKKHSKLYPINKSEEDKKSKCTLHKANNKSNIMSLFFGEKKKKKYLEHEQMNQSQRFKKITKKWDIHKILSDIKGNDKSSFINQDKKINERKYNEIDKNDSDDSNASYDDEKILSHVVKEQMHSGEDEKEELGEPKEKGSKSCQEEEEQDEEEEDEDEEEEEDQGVNNYDNYVDGVDRDVENYDNYIDDVDRDVENYDKGIANVDHHLNDVHKDLDDHKKVEEVIADIEKEDKNVERKNVNLKGAQNKTEYQQELVKKLDTDQNINIDKKTMNQINNSEFSNNVENVQDKQKNKIKKEEMFTKNTKKNMKIKMKDNKNNDMGKLRNIKEKLKKKKMETLLNLSKLNIFHKNSEQISENYIKEEDNLYRNDYNTNESKIWSIYESHVSNDPRGSASTYKGNSSINKFANMSLSNFASFIKKHKNNNSNHSLVGSFKDNLEIKEIISKTNCEKNLNKYIDLNKENVMEIDMKEFVEPNIKHDVEKNVYKDINKNTNNEIVKTHNIVDEKNLNTQIQKYVNYDNEKNIKEDVERNVENNCERHEMKNSEIKKIKLNILEKFRKKEIRKCDNMDDAPRISNKFRYSFFKIRNRFKHNFNACDNKTNQEKKNMERDKMMINSFIKNKNAMVSDANSTSTADSNFDDYGKKHTKEICILINFSYNNMFDIFNYPDDFIETKKRKFSIVHKFFYSLNIFFNSFSTLIKQRYFFRCTSELSNFLKRSLFYDFYNNLLCKISTDDQDRNNFLLDINNSSNEYDVHLKRLSDITYICNSEKPDKYRDLLENKSNITSIYDDKKNVSRTNMSTYINKDMECTWHDNNQNKKSEKNFENIKNENIQEIDKIDLKYNNINNNNNNNNISENNNIRSNIGNEIYNNVSDMNKKNSSNNVNNPMEYNKDYTYNNSSIRDNDNNINVEIYKKNSLNTIEYFENNLSFFNKIHKMNKKKDEYKCDEKLYCKTKNIKSNNELYDVKNSYKLNNNNNNNNMIFNETYNNNTFFKNIYSDSFESKIRVYFNIKSLYEKWKIYFEDKQIDISIQDKFLYNLSFIYNVYNYLILIYIYTYYNEESYLAFCNNQKFYQFIEKIHCYFNEKKNNHILYKNVRNSESFNTSIIPRFLNYHDYKLLKVFFFMLQNSSNKFISKNIHLFNFPVVFIFSSDSKNFNFNHFDIIKISKNNNIIYLLYKRGNEGLFLSGLKPYIWIYRVLFDFVESLFLSSFDN.

The next 2 membrane-spanning stretches (helical) occupy residues 3 to 23 and 51 to 71; these read FFII…NFCS and TIYL…YYYI. Positions 975–998 are enriched in basic and acidic residues; the sequence is QMHSGEDEKEELGEPKEKGSKSCQ. Residues 975–1030 form a disordered region; it reads QMHSGEDEKEELGEPKEKGSKSCQEEEEQDEEEEDEDEEEEEDQGVNNYDNYVDGV. Residues 999–1018 show a composition bias toward acidic residues; it reads EEEEQDEEEEDEDEEEEEDQ. A helical membrane pass occupies residues 1890 to 1910; the sequence is FLYNLSFIYNVYNYLILIYIY.

The protein resides in the membrane. This is an uncharacterized protein from Plasmodium falciparum (isolate 3D7).